The sequence spans 504 residues: MKLLEQIEKWAIETPDQTAFVWRDAKITYKQLKEDSDALAHWISSEYPDDRSPIMVYGHMQPEMIINFLGCVKAGHAYIPVDLSIPADRVQRIAENSGAKLLLSGTEVTVTDLPVRIVSEDNLKDIFFTHKGKTPNPEHAVKGDENFYIIYTSGSTGNPKGVQITYNCLVSFTKWAVEDFNLQTGQVFLNQAPFSFDLSVMDIYPSLVTGGTLWAIDKDMIARPKDLFASLEQSDIQVWTSTPSFAEMCLMEASFSESMLPNMKTFLFCGEVLPNEVARKLIERFPKATIMNTYGPTEATVAVTGIHVTEEVLDQYKSLPVGYCKSDCRLLIMKEDGTIAPDGEKGEIVIVGPSVSVGYLGSPELTEKAFTMIDGERAYKTGDAGYVENGLLFYNGRLDFQIKLHGYRMELEEIEHHLRACSYVEGAVIVPIKKGEKYDYLLAVVVPGEHSFEKEFKLTSAIKKELNERLPNYMIPRKFMYQSSIPMTPNGKVDRKKLLSEVTA.

152 to 153 (TS) contacts ATP. D197 contributes to the D-alanine binding site. Residue 292–297 (NTYGPT) participates in ATP binding. D-alanine is bound at residue V301. Residues D383, 394–397 (YNGR), and K492 contribute to the ATP site. K492 contributes to the D-alanine binding site.

The protein belongs to the ATP-dependent AMP-binding enzyme family. DltA subfamily.

The protein localises to the cytoplasm. It catalyses the reaction holo-[D-alanyl-carrier protein] + D-alanine + ATP = D-alanyl-[D-alanyl-carrier protein] + AMP + diphosphate. Its pathway is cell wall biogenesis; lipoteichoic acid biosynthesis. In terms of biological role, catalyzes the first step in the D-alanylation of lipoteichoic acid (LTA), the activation of D-alanine and its transfer onto the D-alanyl carrier protein (Dcp) DltC. In an ATP-dependent two-step reaction, forms a high energy D-alanyl-AMP intermediate, followed by transfer of the D-alanyl residue as a thiol ester to the phosphopantheinyl prosthetic group of the Dcp. D-alanylation of LTA plays an important role in modulating the properties of the cell wall in Gram-positive bacteria, influencing the net charge of the cell wall. The protein is D-alanine--D-alanyl carrier protein ligase of Bacillus cereus (strain Q1).